The chain runs to 757 residues: 5-methyltetrahydropteroyltriglutamate--homocysteine methyltransferase (757 aa).

5-methyltetrahydropteroyltri-L-glutamate is bound by residues 16-19 (RELK) and Lys-112. L-homocysteine-binding positions include 432–434 (IGS) and Glu-485. Residues 432-434 (IGS) and Glu-485 each bind L-methionine. Residues 516–517 (RC) and Trp-562 contribute to the 5-methyltetrahydropteroyltri-L-glutamate site. Asp-600 contributes to the L-homocysteine binding site. Asp-600 provides a ligand contact to L-methionine. Glu-606 lines the 5-methyltetrahydropteroyltri-L-glutamate pocket. The Zn(2+) site is built by His-642, Cys-644, and Glu-666. His-695 (proton donor) is an active-site residue. Cys-727 provides a ligand contact to Zn(2+).

It belongs to the vitamin-B12 independent methionine synthase family. Zn(2+) serves as cofactor.

The catalysed reaction is 5-methyltetrahydropteroyltri-L-glutamate + L-homocysteine = tetrahydropteroyltri-L-glutamate + L-methionine. It participates in amino-acid biosynthesis; L-methionine biosynthesis via de novo pathway; L-methionine from L-homocysteine (MetE route): step 1/1. Catalyzes the transfer of a methyl group from 5-methyltetrahydrofolate to homocysteine resulting in methionine formation. The sequence is that of 5-methyltetrahydropteroyltriglutamate--homocysteine methyltransferase from Actinobacillus pleuropneumoniae serotype 5b (strain L20).